The chain runs to 137 residues: Small ribosomal subunit protein uS12 (137 aa).

The disordered stretch occupies residues 1–28 (MPTINQLVRKPRKSKAKKSDSPALNKGF). D102 is subject to 3-methylthioaspartic acid.

The protein belongs to the universal ribosomal protein uS12 family. In terms of assembly, part of the 30S ribosomal subunit. Contacts proteins S8 and S17. May interact with IF1 in the 30S initiation complex.

Its function is as follows. With S4 and S5 plays an important role in translational accuracy. Interacts with and stabilizes bases of the 16S rRNA that are involved in tRNA selection in the A site and with the mRNA backbone. Located at the interface of the 30S and 50S subunits, it traverses the body of the 30S subunit contacting proteins on the other side and probably holding the rRNA structure together. The combined cluster of proteins S8, S12 and S17 appears to hold together the shoulder and platform of the 30S subunit. The sequence is that of Small ribosomal subunit protein uS12 from Staphylococcus carnosus (strain TM300).